Reading from the N-terminus, the 426-residue chain is Homeobox protein knotted-1-like LET12 (426 aa).

3 disordered regions span residues 1–26 (MEFQDHFSQEMVLHQQQQQQQQQQNA), 85–158 (QTSN…ENSW), and 270–290 (GVAPGEGTGATMSDDDDDQAD). A compositionally biased stretch (low complexity) spans 15–24 (QQQQQQQQQQ). Residues 104-114 (AGGGSNGGGSG) are compositionally biased toward gly residues. Residues 139–151 (ENNNNNNNNNNNN) show a composition bias toward low complexity. Residues 327-347 (ELKHELKQGYKEKIVDIREEI) form the ELK domain. The homeobox; TALE-type DNA-binding region spans 348–411 (LRKRRAGKLP…NQRKRNWHSN (64 aa)). Positions 406 to 426 (RNWHSNPSTSSSQKSQTQECR) are disordered. Over residues 413 to 426 (STSSSQKSQTQECR) the composition is skewed to low complexity.

It belongs to the TALE/KNOX homeobox family. In terms of tissue distribution, ubiquitously expressed in the mature plant.

The protein resides in the nucleus. Its function is as follows. May have a role to play in formative events in ovule and embryo morphogenesis. The chain is Homeobox protein knotted-1-like LET12 (LET12) from Solanum lycopersicum (Tomato).